We begin with the raw amino-acid sequence, 325 residues long: NADH-quinone oxidoreductase subunit H (325 aa).

8 helical membrane-spanning segments follow: residues 11–31 (ILLT…CGAF), 81–101 (VIFT…FAIV), 114–134 (IGIL…LFAG), 154–174 (LSYE…AGSF), 186–206 (VWNV…GVAV), 237–257 (FFVG…TLFF), 265–285 (LPPF…FILI), and 304–324 (ICLP…LWQA).

This sequence belongs to the complex I subunit 1 family. NDH-1 is composed of 13 different subunits. Subunits NuoA, H, J, K, L, M, N constitute the membrane sector of the complex.

It localises to the cell inner membrane. It catalyses the reaction a quinone + NADH + 5 H(+)(in) = a quinol + NAD(+) + 4 H(+)(out). Its function is as follows. NDH-1 shuttles electrons from NADH, via FMN and iron-sulfur (Fe-S) centers, to quinones in the respiratory chain. The immediate electron acceptor for the enzyme in this species is believed to be ubiquinone. Couples the redox reaction to proton translocation (for every two electrons transferred, four hydrogen ions are translocated across the cytoplasmic membrane), and thus conserves the redox energy in a proton gradient. This subunit may bind ubiquinone. In Escherichia coli O45:K1 (strain S88 / ExPEC), this protein is NADH-quinone oxidoreductase subunit H.